The chain runs to 413 residues: Probable tRNA pseudouridine synthase D (413 aa).

D97 (nucleophile) is an active-site residue. Residues 167 to 370 (AAPNYYGYQR…YGTYRRVRLE (204 aa)) enclose the TRUD domain.

This sequence belongs to the pseudouridine synthase TruD family.

It catalyses the reaction uridine(13) in tRNA = pseudouridine(13) in tRNA. Could be responsible for synthesis of pseudouridine from uracil-13 in transfer RNAs. In Pyrobaculum aerophilum (strain ATCC 51768 / DSM 7523 / JCM 9630 / CIP 104966 / NBRC 100827 / IM2), this protein is Probable tRNA pseudouridine synthase D.